The sequence spans 654 residues: tRNA 5-methylaminomethyl-2-thiouridine biosynthesis bifunctional protein MnmC (654 aa).

Positions 1–236 are tRNA (mnm(5)s(2)U34)-methyltransferase; it reads MSTLLQHAQI…KWEVMSGAYV (236 aa). The FAD-dependent cmnm(5)s(2)U34 oxidoreductase stretch occupies residues 262–654; sequence IGAGLAGSTT…FALRRLIRGK (393 aa).

The protein in the N-terminal section; belongs to the methyltransferase superfamily. tRNA (mnm(5)s(2)U34)-methyltransferase family. It in the C-terminal section; belongs to the DAO family. The cofactor is FAD.

Its subcellular location is the cytoplasm. It carries out the reaction 5-aminomethyl-2-thiouridine(34) in tRNA + S-adenosyl-L-methionine = 5-methylaminomethyl-2-thiouridine(34) in tRNA + S-adenosyl-L-homocysteine + H(+). In terms of biological role, catalyzes the last two steps in the biosynthesis of 5-methylaminomethyl-2-thiouridine (mnm(5)s(2)U) at the wobble position (U34) in tRNA. Catalyzes the FAD-dependent demodification of cmnm(5)s(2)U34 to nm(5)s(2)U34, followed by the transfer of a methyl group from S-adenosyl-L-methionine to nm(5)s(2)U34, to form mnm(5)s(2)U34. The chain is tRNA 5-methylaminomethyl-2-thiouridine biosynthesis bifunctional protein MnmC from Pseudomonas putida (strain GB-1).